A 513-amino-acid polypeptide reads, in one-letter code: ATP synthase subunit alpha 2 (513 aa).

Residue 169 to 176 (GDRQTGKT) coordinates ATP.

The protein belongs to the ATPase alpha/beta chains family. As to quaternary structure, F-type ATPases have 2 components, CF(1) - the catalytic core - and CF(0) - the membrane proton channel. CF(1) has five subunits: alpha(3), beta(3), gamma(1), delta(1), epsilon(1). CF(0) has three main subunits: a(1), b(2) and c(9-12). The alpha and beta chains form an alternating ring which encloses part of the gamma chain. CF(1) is attached to CF(0) by a central stalk formed by the gamma and epsilon chains, while a peripheral stalk is formed by the delta and b chains.

It localises to the cell inner membrane. The catalysed reaction is ATP + H2O + 4 H(+)(in) = ADP + phosphate + 5 H(+)(out). Functionally, produces ATP from ADP in the presence of a proton gradient across the membrane. The alpha chain is a regulatory subunit. This chain is ATP synthase subunit alpha 2, found in Pseudoalteromonas atlantica (strain T6c / ATCC BAA-1087).